The primary structure comprises 196 residues: Orotate phosphoribosyltransferase (196 aa).

5-phospho-alpha-D-ribose 1-diphosphate is bound at residue 117–125 (EDVVTTGLS). Residues Thr121 and Arg149 each contribute to the orotate site.

This sequence belongs to the purine/pyrimidine phosphoribosyltransferase family. PyrE subfamily. Homodimer. It depends on Mg(2+) as a cofactor.

It carries out the reaction orotidine 5'-phosphate + diphosphate = orotate + 5-phospho-alpha-D-ribose 1-diphosphate. It participates in pyrimidine metabolism; UMP biosynthesis via de novo pathway; UMP from orotate: step 1/2. Functionally, catalyzes the transfer of a ribosyl phosphate group from 5-phosphoribose 1-diphosphate to orotate, leading to the formation of orotidine monophosphate (OMP). The sequence is that of Orotate phosphoribosyltransferase from Rhizorhabdus wittichii (strain DSM 6014 / CCUG 31198 / JCM 15750 / NBRC 105917 / EY 4224 / RW1) (Sphingomonas wittichii).